The chain runs to 358 residues: MKKKIILTGGGTAGHVTPNISLIPKLKELGYEVQYIGTKDGIEKSLIKKEGIKYHEISSGKLRRYFDLKNFTDPFKVLKGIMEARKIIKKEKPNIVFSKGGFVAVPVVIGAYLNKVPVISHESDMTPGLANKLSTPYCNKVCVTFPETLKYIKKDKGVLTGTPIREELFLGNEEKGKKICGFKDNKPIVLLVGGSLGSKILNNLIRENIEELLKKFNIIHICGKGNIEKTLENKEGYAQFEYVKEELPHFMKASNIVISRAGANSIFELLALAKPNLLVPLSKKASRGDQILNAKSFEKNGYSLVLEEEELSKKIFLDKLNYLYENREKYIKNMKNSSFKNGIDNIIDLIEKYYTMKN.

UDP-N-acetyl-alpha-D-glucosamine-binding positions include 12–14 (TAG), Arg-165, Ser-195, and Gln-290.

It belongs to the glycosyltransferase 28 family. MurG subfamily.

It localises to the cell membrane. The enzyme catalyses di-trans,octa-cis-undecaprenyl diphospho-N-acetyl-alpha-D-muramoyl-L-alanyl-D-glutamyl-meso-2,6-diaminopimeloyl-D-alanyl-D-alanine + UDP-N-acetyl-alpha-D-glucosamine = di-trans,octa-cis-undecaprenyl diphospho-[N-acetyl-alpha-D-glucosaminyl-(1-&gt;4)]-N-acetyl-alpha-D-muramoyl-L-alanyl-D-glutamyl-meso-2,6-diaminopimeloyl-D-alanyl-D-alanine + UDP + H(+). The protein operates within cell wall biogenesis; peptidoglycan biosynthesis. Cell wall formation. Catalyzes the transfer of a GlcNAc subunit on undecaprenyl-pyrophosphoryl-MurNAc-pentapeptide (lipid intermediate I) to form undecaprenyl-pyrophosphoryl-MurNAc-(pentapeptide)GlcNAc (lipid intermediate II). This chain is UDP-N-acetylglucosamine--N-acetylmuramyl-(pentapeptide) pyrophosphoryl-undecaprenol N-acetylglucosamine transferase, found in Clostridium tetani (strain Massachusetts / E88).